The sequence spans 343 residues: 3-dehydroquinate synthase (343 aa).

Residues 61 to 66 (SGEKYK), 95 to 99 (GVISD), 119 to 120 (TT), Lys132, Lys141, and 159 to 162 (FLKT) each bind NAD(+). Zn(2+) contacts are provided by Glu174, His231, and His248.

This sequence belongs to the sugar phosphate cyclases superfamily. Dehydroquinate synthase family. Co(2+) serves as cofactor. It depends on Zn(2+) as a cofactor. Requires NAD(+) as cofactor.

Its subcellular location is the cytoplasm. It carries out the reaction 7-phospho-2-dehydro-3-deoxy-D-arabino-heptonate = 3-dehydroquinate + phosphate. Its pathway is metabolic intermediate biosynthesis; chorismate biosynthesis; chorismate from D-erythrose 4-phosphate and phosphoenolpyruvate: step 2/7. In terms of biological role, catalyzes the conversion of 3-deoxy-D-arabino-heptulosonate 7-phosphate (DAHP) to dehydroquinate (DHQ). The sequence is that of 3-dehydroquinate synthase from Helicobacter pylori (strain G27).